Here is a 2090-residue protein sequence, read N- to C-terminus: Host cell factor 1 (2090 aa).

At A2 the chain carries N-acetylalanine. S6 carries the post-translational modification Phosphoserine. Kelch repeat units follow at residues L44–C89, R93–H140, K148–G194, K217–N265, and K266–T313. Glycyl lysine isopeptide (Lys-Gly) (interchain with G-Cter in ubiquitin) cross-links involve residues K105, K163, and K244. K282 participates in a covalent cross-link: Glycyl lysine isopeptide (Lys-Gly) (interchain with G-Cter in SUMO2). K288 carries the N6-acetyllysine modification. Residue K363 forms a Glycyl lysine isopeptide (Lys-Gly) (interchain with G-Cter in ubiquitin) linkage. A Fibronectin type-III 1 domain is found at P366–G469. The interval A407–A434 is disordered. S411 carries the post-translational modification Phosphoserine. Positions T413–P428 are enriched in pro residues. Residues L500 to A550 are required for interaction with OGT. 2 positions are modified to omega-N-methylarginine: R504 and R524. Phosphoserine is present on residues S598, S666, and S669. Residues L610 to L722 are interaction with SIN3A. Positions I750–T902 are interaction with ZBTB17. Residue K813 is modified to N6-acetyllysine. Residues K813 to T912 are interaction with GABP2. HCF repeat repeat units lie at residues T1010–A1035, V1072–N1097, and Q1101–S1126. The disordered stretch occupies residues M1098–S1140. The segment covering T1114 to G1130 has biased composition (low complexity). The HCF repeat 4; degenerate repeat unit spans residues T1157 to T1182. Position 1204 is a phosphoserine (S1204). R1216 bears the Asymmetric dimethylarginine mark. S1223 carries the phosphoserine modification. 2 HCF repeat repeats span residues T1295–G1320 and Q1323–N1348. Disordered regions lie at residues P1302–T1374 and T1444–S1486. Residues T1308 to S1321 are compositionally biased toward low complexity. One copy of the HCF repeat 7; degenerate repeat lies at Q1358 to G1383. Residues Q1423–N1448 form an HCF repeat 8 repeat. Residues V1465 to I1475 show a composition bias toward polar residues. Over residues T1476–S1486 the composition is skewed to low complexity. Residue T1500 is modified to Phosphothreonine. Residues S1506, S1559, and S1826 each carry the phosphoserine modification. Fibronectin type-III domains lie at P1853–P1943 and F1945–D2061. Glycyl lysine isopeptide (Lys-Gly) (interchain with G-Cter in ubiquitin) cross-links involve residues K1862 and K1863. S1893 is modified (phosphoserine). The interval A2049–Q2090 is disordered. K2060 carries the N6-acetyllysine modification. Residue K2079 forms a Glycyl lysine isopeptide (Lys-Gly) (interchain with G-Cter in SUMO2) linkage.

Composed predominantly of six polypeptides ranging from 110 to 150 kDa and a minor 300 kDa polypeptide. The majority of N- and C-terminal cleavage products remain tightly, albeit non-covalently, associated. Interacts with POU2F1, CREB3, ZBTB17, EGR2, E2F4, CREBZF, SP1, GABP2, Sin3 HDAC complex (SIN3A, HDAC1, HDAC2, SUDS3), SAP30, SIN3B and FHL2. Component of a MLL1 complex, composed of at least the core components KMT2A/MLL1, ASH2L, HCFC1, WDR5 and RBBP5, as well as the facultative components BACC1, CHD8, DPY30, E2F6, HCFC2, HSP70, INO80C, KANSL1, LAS1L, MAX, MCRS1, MEN1, MGA, KAT8, PELP1, PHF20, PRP31, RING2, RUVBL1, RUVBL2, SENP3, TAF1, TAF4, TAF6, TAF7, TAF9 and TEX10. Component of a THAP1/THAP3-HCFC1-OGT complex that is required for the regulation of the transcriptional activity of RRM1. Interacts directly with THAP3 (via its HBM). Interacts (via the Kelch-repeat domain) with THAP1 (via the HBM); the interaction recruits HCHC1 to the RRM1. Interacts directly with OGT; the interaction, which requires the HCFC1 cleavage site domain, glycosylates and promotes the proteolytic processing of HCFC1 and retains OGT in the nucleus. Component of the SET1 complex, at least composed of the catalytic subunit (SETD1A or SETD1B), WDR5, WDR82, RBBP5, ASH2L, CXXC1, HCFC1 and DPY30. Component of the NSL complex at least composed of MOF/KAT8, KANSL1, KANSL2, KANSL3, MCRS1, PHF20, OGT1/OGT, WDR5 and HCFC1. Component of a complex at least composed of ZNF335, HCFC1, CCAR2, EMSY, MKI67, RBBP5, ASH2L and WDR5; the complex is formed as a result of interactions between components of a nuclear receptor-mediated transcription complex and a histone methylation complex. Within the complex interacts with ZNF335. Interacts with TET2 and TET3. Interacts with HCFC1R1. Interacts with THAP11. Interacts (via Kelch domain) with KMT2E (via HBM motif). Interacts with E2F1. Accessory scaffold component of the polycomb repressive deubiquitinase (PR-DUB) complex, at least composed of BAP1, one of ASXL1, ASXL2 or (probably) ASXL3 and one of MBD5 or MBD6; the PR-DUB core associates with a number of accessory proteins, including FOXK1, FOXK2, KDM1B, HCFC1, YY1 and OGT. Interacts with YY1 (via Gly-rich region); the interaction is direct. Interacts with BAP1 (via HBM-like motif). In terms of processing, proteolytically cleaved at one or several PPCE--THET sites within the HCF repeats. Cleavage is promoted by O-glycosylation. Further cleavage of the primary N- and C-terminal chains results in a 'trimming' and accumulation of the smaller chains. Cleavage is promoted by O-glycosylation. O-glycosylated. GlcNAcylation by OGT promotes proteolytic processing. Post-translationally, ubiquitinated. Lys-1862 and Lys-1863 are ubiquitinated both via 'Lys-48'- and 'Lys-63'-linked polyubiquitin chains. BAP1 mediated deubiquitination of 'Lys-48'-linked polyubiquitin chains; deubiquitination by BAP1 does not seem to stabilize the protein.

The protein resides in the cytoplasm. The protein localises to the nucleus. Functionally, transcriptional coregulator. Serves as a scaffold protein, bridging interactions between transcription factors, including THAP11 and ZNF143, and transcriptional coregulators. Involved in control of the cell cycle. Also antagonizes transactivation by ZBTB17 and GABP2; represses ZBTB17 activation of the p15(INK4b) promoter and inhibits its ability to recruit p300. Coactivator for EGR2 and GABP2. Tethers the chromatin modifying Set1/Ash2 histone H3 'Lys-4' methyltransferase (H3K4me) and Sin3 histone deacetylase (HDAC) complexes (involved in the activation and repression of transcription respectively) together. As part of the NSL complex it may be involved in acetylation of nucleosomal histone H4 on several lysine residues. Recruits KMT2E to E2F1 responsive promoters promoting transcriptional activation and thereby facilitates G1 to S phase transition. Modulates expression of homeobox protein PDX1, perhaps acting in concert with transcription factor E2F1, thereby regulating pancreatic beta-cell growth and glucose-stimulated insulin secretion. May negatively modulate transcriptional activity of FOXO3. This is Host cell factor 1 from Mesocricetus auratus (Golden hamster).